A 132-amino-acid chain; its full sequence is Inclusion membrane protein E (132 aa).

2 helical membrane-spanning segments follow: residues 41–61 (LGVVCSIICLALGIAAAAVGV) and 66–86 (FALGLGIIAILLGIVLFATSA).

The protein resides in the secreted. It is found in the host vacuole. The protein localises to the host pathogen-containing vacuole. It localises to the host pathogen-containing vacuole membrane. Its function is as follows. Inclusion membrane protein probably involved in early modification events of the chlamydial inclusion. This Chlamydia trachomatis serovar L2 (strain ATCC VR-902B / DSM 19102 / 434/Bu) protein is Inclusion membrane protein E.